Consider the following 452-residue polypeptide: Flavin-containing monooxygenase FMO GS-OX-like 4 (452 aa).

Gly-17–Gly-22 is a binding site for FAD. Gly-217–Ala-222 lines the NADP(+) pocket.

The protein belongs to the FMO family. FAD is required as a cofactor.

Catalyzes the conversion of methylthioalkyl glucosinolates of any chain length into methylsulfinylalkyl glucosinolates. This Arabidopsis thaliana (Mouse-ear cress) protein is Flavin-containing monooxygenase FMO GS-OX-like 4.